Reading from the N-terminus, the 370-residue chain is Aminomethyltransferase (370 aa).

It belongs to the GcvT family. The glycine cleavage system is composed of four proteins: P, T, L and H.

The enzyme catalyses N(6)-[(R)-S(8)-aminomethyldihydrolipoyl]-L-lysyl-[protein] + (6S)-5,6,7,8-tetrahydrofolate = N(6)-[(R)-dihydrolipoyl]-L-lysyl-[protein] + (6R)-5,10-methylene-5,6,7,8-tetrahydrofolate + NH4(+). In terms of biological role, the glycine cleavage system catalyzes the degradation of glycine. The sequence is that of Aminomethyltransferase from Clostridium botulinum (strain Kyoto / Type A2).